Here is a 197-residue protein sequence, read N- to C-terminus: dITP/XTP pyrophosphatase (197 aa).

Residue 8 to 13 (TGNPGK) coordinates substrate. Glu-40 and Asp-69 together coordinate Mg(2+). Asp-69 (proton acceptor) is an active-site residue. Substrate contacts are provided by residues Ser-70, 154–157 (FGYD), Lys-177, and 182–183 (HR).

This sequence belongs to the HAM1 NTPase family. Homodimer. Mg(2+) serves as cofactor.

The catalysed reaction is XTP + H2O = XMP + diphosphate + H(+). The enzyme catalyses dITP + H2O = dIMP + diphosphate + H(+). It catalyses the reaction ITP + H2O = IMP + diphosphate + H(+). Functionally, pyrophosphatase that catalyzes the hydrolysis of nucleoside triphosphates to their monophosphate derivatives, with a high preference for the non-canonical purine nucleotides XTP (xanthosine triphosphate), dITP (deoxyinosine triphosphate) and ITP. Seems to function as a house-cleaning enzyme that removes non-canonical purine nucleotides from the nucleotide pool, thus preventing their incorporation into DNA/RNA and avoiding chromosomal lesions. This is dITP/XTP pyrophosphatase from Yersinia pseudotuberculosis serotype I (strain IP32953).